Reading from the N-terminus, the 413-residue chain is CCA-adding enzyme (413 aa).

Positions 42 and 45 each coordinate ATP. CTP is bound by residues Ser42 and Lys45. Mg(2+) contacts are provided by Asp54, Asp56, and Asp107. His130, Lys150, and Tyr159 together coordinate ATP. Residues His130, Lys150, and Tyr159 each coordinate CTP.

The protein belongs to the tRNA nucleotidyltransferase/poly(A) polymerase family. Archaeal CCA-adding enzyme subfamily. As to quaternary structure, homodimer. Mg(2+) is required as a cofactor.

The catalysed reaction is a tRNA precursor + 2 CTP + ATP = a tRNA with a 3' CCA end + 3 diphosphate. It catalyses the reaction a tRNA with a 3' CCA end + 2 CTP + ATP = a tRNA with a 3' CCACCA end + 3 diphosphate. In terms of biological role, catalyzes the addition and repair of the essential 3'-terminal CCA sequence in tRNAs without using a nucleic acid template. Adds these three nucleotides in the order of C, C, and A to the tRNA nucleotide-73, using CTP and ATP as substrates and producing inorganic pyrophosphate. tRNA 3'-terminal CCA addition is required both for tRNA processing and repair. Also involved in tRNA surveillance by mediating tandem CCA addition to generate a CCACCA at the 3' terminus of unstable tRNAs. While stable tRNAs receive only 3'-terminal CCA, unstable tRNAs are marked with CCACCA and rapidly degraded. The polypeptide is CCA-adding enzyme (Sulfurisphaera tokodaii (strain DSM 16993 / JCM 10545 / NBRC 100140 / 7) (Sulfolobus tokodaii)).